The chain runs to 343 residues: Allergin-1 (343 aa).

The signal sequence occupies residues 1–19; that stretch reads MWSHLNRLLFWSIFSSVTC. At 20-227 the chain is on the extracellular side; sequence RKAVLDCEAM…GGDSCPFCLK (208 aa). Ig-like C2-type domains follow at residues 35–118 and 128–213; these read PSPC…RDFS and PVLN…HPVT. Residues Asn-51, Asn-60, Asn-89, Asn-151, Asn-157, and Asn-182 are each glycosylated (N-linked (GlcNAc...) asparagine). Disulfide bonds link Cys-56-Cys-103 and Cys-147-Cys-196. The helical transmembrane segment at 228–248 threads the bilayer; that stretch reads LLLPGLLLLLVVIILILAFWV. At 249–343 the chain is on the cytoplasmic side; sequence LPKYKTRKAM…SGYVYSELNF (95 aa). 2 consecutive short sequence motifs (ITIM motif) follow at residues 311-316 and 336-341; these read LQYATP and YVYSEL. Phosphotyrosine is present on residues Tyr-313 and Tyr-338.

As to quaternary structure, monomer. Interacts (tyrosine-phosphorylated) with PTPN6, PTPN11 and INPP5D. In terms of processing, N-glycosylated. In terms of tissue distribution, expressed in myeloid cells (dendritic cells, macrophages and neutrophils, weak expression on B-cells but not in T-cells or natural killer cells), peripheral blood basophils and mast cells (at protein level).

Its subcellular location is the cell membrane. Its function is as follows. Immunoglobulin-like receptor which plays an inhibitory role in degranulation of mast cells. Negatively regulates IgE-mediated mast cell activation and suppresses the type I immediate hypersensitivity reaction. The sequence is that of Allergin-1 (MILR1) from Homo sapiens (Human).